The following is a 266-amino-acid chain: tRNA pseudouridine synthase A (266 aa).

Asp51 acts as the Nucleophile in catalysis. Tyr106 contributes to the substrate binding site.

The protein belongs to the tRNA pseudouridine synthase TruA family.

It carries out the reaction uridine(38/39/40) in tRNA = pseudouridine(38/39/40) in tRNA. Formation of pseudouridine at positions 38, 39 and 40 in the anticodon stem and loop of transfer RNAs. This chain is tRNA pseudouridine synthase A, found in Pyrococcus furiosus (strain ATCC 43587 / DSM 3638 / JCM 8422 / Vc1).